Here is a 253-residue protein sequence, read N- to C-terminus: uncharacterized protein (253 aa).

An N-terminal signal peptide occupies residues 1–19; it reads MHYLKKVTIYISLLILVSG. Cys-20 carries the N-palmitoyl cysteine lipid modification. Cys-20 carries S-diacylglycerol cysteine lipidation.

It belongs to the staphylococcal tandem lipoprotein family.

The protein resides in the cell membrane. This is an uncharacterized protein from Staphylococcus epidermidis (strain ATCC 35984 / DSM 28319 / BCRC 17069 / CCUG 31568 / BM 3577 / RP62A).